A 92-amino-acid polypeptide reads, in one-letter code: Acyl-CoA-binding protein (92 aa).

The ACB domain occupies 3-88 (LKEDFEEHAE…VKQLLEAEAS (86 aa)). An acyl-CoA contacts are provided by residues 30-34 (YGLYK), K56, and Y75.

It belongs to the ACBP family.

Functionally, binds medium- and long-chain acyl-CoA esters with very high affinity and may function as an intracellular carrier of acyl-CoA esters. The sequence is that of Acyl-CoA-binding protein from Brassica napus (Rape).